Here is a 271-residue protein sequence, read N- to C-terminus: Large ribosomal subunit protein uL3c (271 aa).

The N-terminal 49 residues, 1-49, are a transit peptide targeting the chloroplast; the sequence is MAIAMAVVSFPSLLNKTTLSSSLFTPTFLPAKSSSLLIKSSPKTRFVVS. Residues 190-222 are disordered; the sequence is HGSKSHRALGSIGAGTTPGRVYKGKKMPGRMGG.

The protein belongs to the universal ribosomal protein uL3 family. Part of the 50S ribosomal subunit.

Its subcellular location is the plastid. The protein resides in the chloroplast. Its function is as follows. One of the primary rRNA binding proteins, it binds directly near the 3'-end of the 23S rRNA, where it nucleates assembly of the 50S subunit. The protein is Large ribosomal subunit protein uL3c (RPL3A) of Arabidopsis thaliana (Mouse-ear cress).